The primary structure comprises 153 residues: Deoxyuridine 5'-triphosphate nucleotidohydrolase (153 aa).

Residues 71–73 (RSG), N84, 88–90 (TID), and K98 each bind substrate.

Belongs to the dUTPase family. Requires Mg(2+) as cofactor.

The enzyme catalyses dUTP + H2O = dUMP + diphosphate + H(+). Its pathway is pyrimidine metabolism; dUMP biosynthesis; dUMP from dCTP (dUTP route): step 2/2. In terms of biological role, this enzyme is involved in nucleotide metabolism: it produces dUMP, the immediate precursor of thymidine nucleotides and it decreases the intracellular concentration of dUTP so that uracil cannot be incorporated into DNA. The polypeptide is Deoxyuridine 5'-triphosphate nucleotidohydrolase (Ehrlichia canis (strain Jake)).